The primary structure comprises 29 residues: Kunitz-type trypsin inhibitor IVTI (29 aa).

This sequence belongs to the protease inhibitor I3 (leguminous Kunitz-type inhibitor) family. As to quaternary structure, monomer and dimer.

Its function is as follows. Inhibits bovine trypsin but not chymotrypsin. Also inhibits trypsin-like enzymes from midgut of several lepidopteran species and inhibits larval development in those species. Has fungicidal activity against yeast C.buinensis. Has a bacteriostatic effect against E.coli. Is not cytotoxic. This Inga vera (River koko) protein is Kunitz-type trypsin inhibitor IVTI.